Here is a 96-residue protein sequence, read N- to C-terminus: Evasin P1078 (96 aa).

The N-terminal stretch at M1–A28 is a signal peptide. 3 cysteine pairs are disulfide-bonded: C48/C67, C52/C69, and C63/C80. N-linked (GlcNAc...) asparagine glycosylation is present at N51. N74 carries an N-linked (GlcNAc...) asparagine glycan.

The protein resides in the secreted. Functionally, salivary chemokine-binding protein which binds to host chemokines CXCL1, CXCL2, CXCL3, CXCL5, CXCL6, CXCL11 and CXCL13. This chain is Evasin P1078, found in Ixodes ricinus (Common tick).